The sequence spans 212 residues: MTSIADIRTDYARASLDIADVDPNPLRQFRRWFDEAIRAEVAEVNAMTLATVDPQGQPSARIVLLKNLDERGFTFFTNYCSHKGEELAANPHAALLFHWIGLERQVRVQGVVEKVSEAESDAYYHSRPLGSRLGAWASEQSSEVPDRAVLEAREAEYRERFGDAPPRPPHWGGYRLLPERIEFWQGRPSRLHDRLEYRRQPDGGWHIVRLAP.

Substrate contacts are provided by residues 8-11 (RTDY) and Lys66. Residues 61–66 (RIVLLK), 76–77 (FT), Lys83, and Gln105 contribute to the FMN site. Substrate-binding residues include Tyr123, Arg127, and Ser131. FMN is bound by residues 140 to 141 (QS) and Trp184. A substrate-binding site is contributed by 190–192 (RLH). Arg194 contacts FMN.

This sequence belongs to the pyridoxamine 5'-phosphate oxidase family. Homodimer. The cofactor is FMN.

The catalysed reaction is pyridoxamine 5'-phosphate + O2 + H2O = pyridoxal 5'-phosphate + H2O2 + NH4(+). The enzyme catalyses pyridoxine 5'-phosphate + O2 = pyridoxal 5'-phosphate + H2O2. The protein operates within cofactor metabolism; pyridoxal 5'-phosphate salvage; pyridoxal 5'-phosphate from pyridoxamine 5'-phosphate: step 1/1. Its pathway is cofactor metabolism; pyridoxal 5'-phosphate salvage; pyridoxal 5'-phosphate from pyridoxine 5'-phosphate: step 1/1. Catalyzes the oxidation of either pyridoxine 5'-phosphate (PNP) or pyridoxamine 5'-phosphate (PMP) into pyridoxal 5'-phosphate (PLP). The chain is Pyridoxine/pyridoxamine 5'-phosphate oxidase 1 from Ralstonia nicotianae (strain ATCC BAA-1114 / GMI1000) (Ralstonia solanacearum).